The sequence spans 283 residues: Putative 4-diphosphocytidyl-2-C-methyl-D-erythritol kinase (283 aa).

Residue Lys10 is part of the active site. 94–104 (PVCAGLGGGST) is a binding site for ATP. The active site involves Asp136.

This sequence belongs to the GHMP kinase family. IspE subfamily.

The catalysed reaction is 4-CDP-2-C-methyl-D-erythritol + ATP = 4-CDP-2-C-methyl-D-erythritol 2-phosphate + ADP + H(+). Catalyzes the phosphorylation of the position 2 hydroxy group of 4-diphosphocytidyl-2C-methyl-D-erythritol. The sequence is that of Putative 4-diphosphocytidyl-2-C-methyl-D-erythritol kinase from Streptococcus agalactiae serotype III (strain NEM316).